Here is a 301-residue protein sequence, read N- to C-terminus: 4-diphosphocytidyl-2-C-methyl-D-erythritol kinase (301 aa).

Residue K18 is part of the active site. 103 to 113 lines the ATP pocket; it reads PVAAGIGGGSA. D145 is an active-site residue.

It belongs to the GHMP kinase family. IspE subfamily.

The enzyme catalyses 4-CDP-2-C-methyl-D-erythritol + ATP = 4-CDP-2-C-methyl-D-erythritol 2-phosphate + ADP + H(+). It participates in isoprenoid biosynthesis; isopentenyl diphosphate biosynthesis via DXP pathway; isopentenyl diphosphate from 1-deoxy-D-xylulose 5-phosphate: step 3/6. Its function is as follows. Catalyzes the phosphorylation of the position 2 hydroxy group of 4-diphosphocytidyl-2C-methyl-D-erythritol. The sequence is that of 4-diphosphocytidyl-2-C-methyl-D-erythritol kinase from Bradyrhizobium sp. (strain BTAi1 / ATCC BAA-1182).